The primary structure comprises 741 residues: D-(-)-3-hydroxybutyrate oligomer hydrolase (741 aa).

An N-terminal signal peptide occupies residues 1-23 (MKTIQGKSPGRWYSRGMLLAAMA). Residues 45-68 (NGNAGGNGNNNGNNNGNTVSNTKP) are disordered. Catalysis depends on Ser-338, which acts as the Charge relay system.

This sequence belongs to the D-(-)-3-hydroxybutyrate oligomer hydrolase family.

It localises to the secreted. The enzyme catalyses (3R)-hydroxybutanoate dimer + H2O = 2 (R)-3-hydroxybutanoate + H(+). It functions in the pathway lipid metabolism; butanoate metabolism. Participates in the degradation of poly-3-hydroxybutyrate (PHB). It works downstream of poly(3-hydroxybutyrate) depolymerase, hydrolyzing D(-)-3-hydroxybutyrate oligomers of various length (3HB-oligomers) into 3HB-monomers. The polypeptide is D-(-)-3-hydroxybutyrate oligomer hydrolase (Ralstonia pickettii (Burkholderia pickettii)).